We begin with the raw amino-acid sequence, 676 residues long: Envelope glycoprotein (676 aa).

The N-terminal stretch at 1–32 (MGVTGILQLPRDRFKRTSFFLWVIILFQRTFS) is a signal peptide. At 33–650 (IPLGVIHNST…NDNWWTGWRQ (618 aa)) the chain is on the extracellular side. A glycan (N-linked (GlcNAc...) asparagine; by host) is linked at N40. Intrachain disulfides connect C53–C609, C108–C135, C121–C147, C511–C556, and C601–C608. The segment at 54–201 (RDKLSSTNQL…DFFSSHPLRE (148 aa)) is receptor-binding. 11 N-linked (GlcNAc...) asparagine; by host glycosylation sites follow: N204, N228, N238, N257, N268, N296, N317, N333, N346, N386, and N413. The segment at 305-485 (ELSFTVVSNG…SGKLGLITNT (181 aa)) is mucin-like region. The span at 315–335 (AKNISGQSPARTSSDPGTNTT) shows a compositional bias: polar residues. The disordered stretch occupies residues 315–337 (AKNISGQSPARTSSDPGTNTTTE). Polar residues predominate over residues 373 to 391 (TSPQSLTTKPGPDNSTHNT). Disordered stretches follow at residues 373–392 (TSPQSLTTKPGPDNSTHNTP) and 402–479 (TQVE…SGKL). Residues 414–432 (DSTASDTPSATTAAGPPKA) are compositionally biased toward low complexity. The segment covering 433 to 464 (ENTNTSKSTDFLDPATTTSPQNHSETAGNNNT) has biased composition (polar residues). N-linked (GlcNAc...) asparagine; by host glycosylation is found at N436, N454, and N462. The segment at 524–539 (GAAIGLAWIPYFGPAA) is fusion peptide. Residues 554–595 (LICGLRQLANETTQALQLFLRATTELRTFSILNRKAIDFLLQ) adopt a coiled-coil conformation. A glycan (N-linked (GlcNAc...) asparagine; by host) is linked at N563. Residues 615 to 634 (WTKNITDKIDQIIHDFVDKT) adopt a coiled-coil conformation. N618 carries an N-linked (GlcNAc...) asparagine; by host glycan. Residues 651–671 (WIPAGIGVTGVIIAVIALFCI) form a helical membrane-spanning segment. Residues C670 and C672 are each lipidated (S-palmitoyl cysteine; by host). Topologically, residues 672-676 (CKFVF) are cytoplasmic.

Belongs to the filoviruses glycoprotein family. Homotrimer; each monomer consists of a GP1 and a GP2 subunit linked by disulfide bonds. The resulting peplomers (GP1,2) protrude from the virus surface as spikes. Interacts with host integrin alpha-V/ITGAV. Interacts with host CLEC10A. Binds also to host CD209 and CLEC4M/DC-SIGN(R). Interacts with host FOLR1. Interacts with BST2; this interaction inhibits the antiviral effect of BST2 and this allows viral release from infected cells. Interacts with host FCN1; this interaction enhances viral entry. Interacts with host TLR4; this interaction induces cell death in T-lymphocytes or proinflammatory cytokines and SOCS1 production in monocytes. In terms of assembly, interacts with host entry receptor NPC1. As to quaternary structure, GP1 and GP2delta are part of GP1,2delta soluble complexes released by ectodomain shedding. Post-translationally, the signal peptide region modulates GP's high mannose glycosylation, thereby determining the efficiency of the interactions with DC-SIGN(R). N-glycosylated. In terms of processing, O-glycosylated in the mucin-like region. Post-translationally, palmitoylation of GP2 is not required for its function. Specific enzymatic cleavages in vivo yield mature proteins. The precursor is processed into GP1 and GP2 by host cell furin in the trans Golgi, and maybe by other host proteases, to yield the mature GP1 and GP2 proteins. The cleavage site corresponds to the furin optimal cleavage sequence [KR]-X-[KR]-R. This cleavage does not seem to be required for function. After the internalization of the virus into cell endosomes, GP1 C-terminus is removed by the endosomal proteases cathepsin B, cathepsin L, or both, leaving a 19-kDa N-terminal fragment which is further digested by cathepsin B. Proteolytic processing of GP1,2 by host ADAM17 can remove the transmembrane anchor of GP2 and leads to shedding of complexes consisting in GP1 and truncated GP2 (GP1,2delta).

The protein localises to the virion membrane. The protein resides in the host cell membrane. Its subcellular location is the secreted. Trimeric GP1,2 complexes form the virion surface spikes and mediate the viral entry processes, with GP1 acting as the receptor-binding subunit and GP2 as the membrane fusion subunit. At later times of infection, down-regulates the expression of various host cell surface molecules that are essential for immune surveillance and cell adhesion. Down-modulates several integrins including ITGA1, ITGA2, ITGA3, ITGA4, ITGA5, ITGA6, ITGAV and ITGB1. This decrease in cell adhesion molecules may lead to cell detachment, contributing to the disruption of blood vessel integrity and hemorrhages developed during infection (cytotoxicity). Interacts with host TLR4 and thereby stimulates the differentiation and activation of monocytes leading to bystander death of T-lymphocytes. Down-regulates as well the function of host natural killer cells. Counteracts the antiviral effect of host BST2/tetherin that restricts release of progeny virions from infected cells. However, cooperates with VP40 and host BST2 to activate canonical NF-kappa-B pathway in a manner dependent on neddylation. Its function is as follows. Functions as a decoy for anti-GP1,2 antibodies thereby contributing to viral immune evasion. Interacts and activates host macrophages and dendritic cells inducing up-regulation of cytokine transcription. This effect is mediated throught activation of host TLR4. Functionally, responsible for binding to the receptor(s) on target cells. Interacts with CD209/DC-SIGN and CLEC4M/DC-SIGNR which act as cofactors for virus entry into dendritic cells (DCs) and endothelial cells. Binding to the macrophage specific lectin CLEC10A also seems to enhance virus infectivity. Interaction with FOLR1/folate receptor alpha may be a cofactor for virus entry in some cell types, although results are contradictory. Members of the Tyro3 receptor tyrosine kinase family also seem to be cell entry factors in filovirus infection. Once attached, the virions are internalized through clathrin-dependent endocytosis and/or macropinocytosis. After internalization of the virus into the endosomes of the host cell, proteolysis of GP1 by two cysteine proteases, CTSB/cathepsin B and CTSL/cathepsin L removes the glycan cap and allows GP1 binding to the host entry receptor NPC1. NPC1-binding, Ca(2+) and acidic pH induce a conformational change of GP2, which unmasks its fusion peptide and permit membranes fusion. In terms of biological role, acts as a class I viral fusion protein. Under the current model, the protein has at least 3 conformational states: pre-fusion native state, pre-hairpin intermediate state, and post-fusion hairpin state. During viral and target cell membrane fusion, the coiled coil regions (heptad repeats) assume a trimer-of-hairpins structure, positioning the fusion peptide in close proximity to the C-terminal region of the ectodomain. The formation of this structure appears to drive apposition and subsequent fusion of viral and target cell membranes. Responsible for penetration of the virus into the cell cytoplasm by mediating the fusion of the membrane of the endocytosed virus particle with the endosomal membrane. Low pH in endosomes induces an irreversible conformational change in GP2, releasing the fusion hydrophobic peptide. This Epomops franqueti (Franquet's epauletted fruit bat) protein is Envelope glycoprotein (GP).